The primary structure comprises 475 residues: Ribulose bisphosphate carboxylase large chain (475 aa).

Residues 1–2 (MS) constitute a propeptide that is removed on maturation. Pro-3 bears the N-acetylproline mark. The residue at position 14 (Lys-14) is an N6,N6,N6-trimethyllysine. The substrate site is built by Asn-123 and Thr-173. Lys-175 acts as the Proton acceptor in catalysis. Residue Lys-177 participates in substrate binding. Positions 201, 203, and 204 each coordinate Mg(2+). Residue Lys-201 is modified to N6-carboxylysine. Residue His-294 is the Proton acceptor of the active site. Residues Arg-295, His-327, and Ser-379 each contribute to the substrate site.

Belongs to the RuBisCO large chain family. Type I subfamily. In terms of assembly, heterohexadecamer of 8 large chains and 8 small chains; disulfide-linked. The disulfide link is formed within the large subunit homodimers. The cofactor is Mg(2+). The disulfide bond which can form in the large chain dimeric partners within the hexadecamer appears to be associated with oxidative stress and protein turnover.

The protein localises to the plastid. It localises to the chloroplast. The catalysed reaction is 2 (2R)-3-phosphoglycerate + 2 H(+) = D-ribulose 1,5-bisphosphate + CO2 + H2O. It catalyses the reaction D-ribulose 1,5-bisphosphate + O2 = 2-phosphoglycolate + (2R)-3-phosphoglycerate + 2 H(+). Its function is as follows. RuBisCO catalyzes two reactions: the carboxylation of D-ribulose 1,5-bisphosphate, the primary event in carbon dioxide fixation, as well as the oxidative fragmentation of the pentose substrate in the photorespiration process. Both reactions occur simultaneously and in competition at the same active site. The chain is Ribulose bisphosphate carboxylase large chain from Chloranthus spicatus (Chulantree).